Reading from the N-terminus, the 423-residue chain is Anhydromevalonate phosphate decarboxylase (423 aa).

Mn(2+) is bound by residues Asn-134 and Glu-197. Asp-245 serves as the catalytic Proton acceptor.

This sequence belongs to the UbiD family. Prenylated FMN is required as a cofactor. The cofactor is Mn(2+).

It catalyses the reaction (2E)-3-methyl-5-phosphooxypent-2-enoate + H(+) = isopentenyl phosphate + CO2. It participates in isoprenoid biosynthesis; isopentenyl diphosphate biosynthesis via mevalonate pathway. Catalyzes the conversion of trans-anhydromevalonate 5-phosphate (tAHMP) into isopentenyl phosphate. Involved in the archaeal mevalonate (MVA) pathway, which provides fundamental precursors for isoprenoid biosynthesis, such as isopentenyl diphosphate (IPP) and dimethylallyl diphosphate (DMAPP). The chain is Anhydromevalonate phosphate decarboxylase from Methanothermobacter thermautotrophicus (strain ATCC 29096 / DSM 1053 / JCM 10044 / NBRC 100330 / Delta H) (Methanobacterium thermoautotrophicum).